The sequence spans 350 residues: UDP-glucose 4-epimerase (350 aa).

Residues 13 to 15 (GYI), 34 to 38 (DNLCN), 67 to 68 (DI), F89, and K93 contribute to the NAD(+) site. Position 133-135 (133-135 (SAT)) interacts with substrate. Catalysis depends on Y158, which acts as the Proton acceptor. Residues K162 and Y186 each contribute to the NAD(+) site. Substrate is bound by residues 186-188 (YFN), 207-209 (NNL), 225-227 (SVY), R240, and 303-306 (RSGD).

This sequence belongs to the NAD(P)-dependent epimerase/dehydratase family. As to quaternary structure, homodimer. It depends on NAD(+) as a cofactor.

It carries out the reaction UDP-alpha-D-glucose = UDP-alpha-D-galactose. The catalysed reaction is UDP-N-acetyl-alpha-D-glucosamine = UDP-N-acetyl-alpha-D-galactosamine. Its pathway is carbohydrate metabolism; galactose metabolism. In terms of biological role, catalyzes two distinct but analogous reactions: the reversible epimerization of UDP-glucose to UDP-galactose and the reversible epimerization of UDP-N-acetylglucosamine to UDP-N-acetylgalactosamine. The reaction with UDP-Gal plays a critical role in the Leloir pathway of galactose catabolism in which galactose is converted to the glycolytic intermediate glucose 6-phosphate. It contributes to the catabolism of dietary galactose and enables the endogenous biosynthesis of both UDP-Gal and UDP-GalNAc when exogenous sources are limited. Both UDP-sugar interconversions are important in the synthesis of glycoproteins and glycolipids. The chain is UDP-glucose 4-epimerase (Gale) from Drosophila melanogaster (Fruit fly).